The following is an 89-amino-acid chain: Small ribosomal subunit protein uS15 (89 aa).

Residues 1-11 (MSITAERKAEV) are compositionally biased toward basic and acidic residues. The segment at 1–24 (MSITAERKAEVIKTSATKAGDTGS) is disordered.

The protein belongs to the universal ribosomal protein uS15 family. In terms of assembly, part of the 30S ribosomal subunit. Forms a bridge to the 50S subunit in the 70S ribosome, contacting the 23S rRNA.

Its function is as follows. One of the primary rRNA binding proteins, it binds directly to 16S rRNA where it helps nucleate assembly of the platform of the 30S subunit by binding and bridging several RNA helices of the 16S rRNA. Functionally, forms an intersubunit bridge (bridge B4) with the 23S rRNA of the 50S subunit in the ribosome. The protein is Small ribosomal subunit protein uS15 of Rhodopseudomonas palustris (strain TIE-1).